A 347-amino-acid polypeptide reads, in one-letter code: Heat-inducible transcription repressor HrcA (347 aa).

The protein belongs to the HrcA family.

Negative regulator of class I heat shock genes (grpE-dnaK-dnaJ and groELS operons). Prevents heat-shock induction of these operons. The chain is Heat-inducible transcription repressor HrcA from Lactiplantibacillus plantarum (strain ATCC BAA-793 / NCIMB 8826 / WCFS1) (Lactobacillus plantarum).